Reading from the N-terminus, the 496-residue chain is Endoglucanase (496 aa).

The first 23 residues, 1–23 (MGYHSVFIAVFLWSSMVCHNGLA), serve as a signal peptide directing secretion. Asp93 acts as the Nucleophile in catalysis. Residues His415, Asp467, and Glu476 contribute to the active site.

The protein belongs to the glycosyl hydrolase 9 (cellulase E) family.

The catalysed reaction is Endohydrolysis of (1-&gt;4)-beta-D-glucosidic linkages in cellulose, lichenin and cereal beta-D-glucans.. Functionally, involved in ripening fruit process. This is Endoglucanase from Phaseolus vulgaris (Kidney bean).